We begin with the raw amino-acid sequence, 349 residues long: Dihydroorotate dehydrogenase (quinone) (349 aa).

FMN-binding positions include 67 to 71 (AGLDK) and threonine 91. A substrate-binding site is contributed by lysine 71. Position 116–120 (116–120 (NRLGF)) interacts with substrate. Positions 147 and 180 each coordinate FMN. Asparagine 180 serves as a coordination point for substrate. Serine 183 serves as the catalytic Nucleophile. Residue asparagine 185 coordinates substrate. The FMN site is built by lysine 225 and threonine 253. 254-255 (NT) contacts substrate. Residues glycine 276, glycine 305, and 326-327 (YT) each bind FMN.

This sequence belongs to the dihydroorotate dehydrogenase family. Type 2 subfamily. In terms of assembly, monomer. The cofactor is FMN.

The protein resides in the cell membrane. It carries out the reaction (S)-dihydroorotate + a quinone = orotate + a quinol. It functions in the pathway pyrimidine metabolism; UMP biosynthesis via de novo pathway; orotate from (S)-dihydroorotate (quinone route): step 1/1. Catalyzes the conversion of dihydroorotate to orotate with quinone as electron acceptor. The polypeptide is Dihydroorotate dehydrogenase (quinone) (Bordetella parapertussis (strain 12822 / ATCC BAA-587 / NCTC 13253)).